Here is a 743-residue protein sequence, read N- to C-terminus: Protein will decrease acetylation (743 aa).

WD repeat units follow at residues 389–428 (ERSR…CRGK), 493–524 (LRGH…MRCW), 535–576 (YRSH…ALII), 577–618 (YAGH…LMRV), 619–660 (FADC…QLAE), and 661–702 (LKDH…PMSD).

Belongs to the WD repeat TAF5 family. Component of the Spt-Ada-Gcn5 acetyltransferase (SAGA) complex consisting of wda/Taf5L, Saf6, Taf9, Taf10b, Taf12, Ada1, Spt3, Spt7, Spt20, Sf3b3, Sf3b5, Nipped-A/Tra1, a histone acetyltransferase (HAT) module made up of Gcn5, Ada2b (Isoform B), Ada3 and Sgf29, and a deubiquitinase (DUB) module made up of not/nonstop, Sgf11 and e(y)2 tethered to SAGA by Atxn7. Not essential for the assembly or integrity of the SAGA complex. Not a component of the Ada2a-containing ATAC complex.

It is found in the nucleus. Its subcellular location is the chromosome. Its function is as follows. Component of the transcription regulatory complex SAGA, a multiprotein complex that activates transcription by remodeling chromatin and mediating histone acetylation and deubiquitination. The SAGA complex predominantly acetylates histone H3. Involved in acetylation of histone H3 on 'Lys-10' (H3K9ac) by the SAGA complex in the larval central nervous system. Involved in SAGA complex coactivator functions. Required for oogenesis. The protein is Protein will decrease acetylation of Drosophila melanogaster (Fruit fly).